Consider the following 274-residue polypeptide: 4-diphosphocytidyl-2-C-methyl-D-erythritol kinase (274 aa).

Lysine 10 is an active-site residue. 101-111 is a binding site for ATP; sequence PTQAGLGGGSA. Aspartate 143 is an active-site residue.

The protein belongs to the GHMP kinase family. IspE subfamily.

The enzyme catalyses 4-CDP-2-C-methyl-D-erythritol + ATP = 4-CDP-2-C-methyl-D-erythritol 2-phosphate + ADP + H(+). It functions in the pathway isoprenoid biosynthesis; isopentenyl diphosphate biosynthesis via DXP pathway; isopentenyl diphosphate from 1-deoxy-D-xylulose 5-phosphate: step 3/6. Its function is as follows. Catalyzes the phosphorylation of the position 2 hydroxy group of 4-diphosphocytidyl-2C-methyl-D-erythritol. The sequence is that of 4-diphosphocytidyl-2-C-methyl-D-erythritol kinase from Helicobacter pylori (strain HPAG1).